The primary structure comprises 232 residues: MQQLYDFYILHQRKYRENSLLVSVFTREFGKLSALIAINKKTTNLYQPLVKLRGQINLAKKADSLSKIYNIEFVESFYQKTYINLLSLQYINELIYLLLNYSHEEDVLFDKYDFILRNIDEANYRYLLRLFELELLNSLGQGIYVDSDIDGMSIQNDCNYIILPNGFRKDFSFAVNSISGSSLKKINQPLSSWSDDDLKAISRVTRVCVDYVLAGKQLKSRKLLVDYLNLKK.

Belongs to the RecO family.

Involved in DNA repair and RecF pathway recombination. This chain is DNA repair protein RecO, found in Francisella tularensis subsp. novicida (strain U112).